Reading from the N-terminus, the 328-residue chain is Alpha-tubulin N-acetyltransferase 2 (328 aa).

Positions 5–185 (SQVALLPKLS…NNFVVFHRYF (181 aa)) constitute an N-acetyltransferase domain. Acetyl-CoA is bound by residues 119-132 (FFVDTSFQRKGFGK) and 155-164 (SVKFLAFLRK). 2 disordered regions span residues 219 to 261 (EYQS…PGKK) and 282 to 328 (GGDP…TPEH). The segment covering 238-248 (TPPPPLPPPLV) has biased composition (pro residues). A compositionally biased stretch (polar residues) spans 312 to 328 (PTRSGVQYNIISGTPEH).

Belongs to the acetyltransferase ATAT1 family.

The catalysed reaction is L-lysyl-[alpha-tubulin] + acetyl-CoA = N(6)-acetyl-L-lysyl-[alpha-tubulin] + CoA + H(+). Its function is as follows. Specifically acetylates 'Lys-40' in alpha-tubulin on the lumenal side of microtubules. Promotes microtubule destabilization and accelerates microtubule dynamics; this activity may be independent of acetylation activity. Acetylates alpha-tubulin with a slow enzymatic rate, due to a catalytic site that is not optimized for acetyl transfer. Enters the microtubule through each end and diffuses quickly throughout the lumen of microtubules. Acetylates only long/old microtubules because of its slow acetylation rate since it does not have time to act on dynamically unstable microtubules before the enzyme is released. The protein is Alpha-tubulin N-acetyltransferase 2 of Trypanosoma cruzi (strain CL Brener).